The following is a 78-amino-acid chain: Large ribosomal subunit protein bL28 (78 aa).

The protein belongs to the bacterial ribosomal protein bL28 family.

The polypeptide is Large ribosomal subunit protein bL28 (Pasteurella multocida (strain Pm70)).